The primary structure comprises 895 residues: Protein translocase subunit SecA (895 aa).

ATP-binding positions include Gln87, 105–109 (GEGKT), and Asp512. Over residues 833-852 (TQEEVEQAERQRQEMAKRET) the composition is skewed to basic and acidic residues. Residues 833 to 895 (TQEEVEQAER…KHCHGSKAKY (63 aa)) form a disordered region. 4 residues coordinate Zn(2+): Cys877, Cys879, Cys888, and His889. Basic residues predominate over residues 883–895 (KKYKHCHGSKAKY).

It belongs to the SecA family. As to quaternary structure, monomer and homodimer. Part of the essential Sec protein translocation apparatus which comprises SecA, SecYEG and auxiliary proteins SecDF-YajC and YidC. Requires Zn(2+) as cofactor.

Its subcellular location is the cell inner membrane. It is found in the cytoplasm. The catalysed reaction is ATP + H2O + cellular proteinSide 1 = ADP + phosphate + cellular proteinSide 2.. In terms of biological role, part of the Sec protein translocase complex. Interacts with the SecYEG preprotein conducting channel. Has a central role in coupling the hydrolysis of ATP to the transfer of proteins into and across the cell membrane, serving both as a receptor for the preprotein-SecB complex and as an ATP-driven molecular motor driving the stepwise translocation of polypeptide chains across the membrane. This chain is Protein translocase subunit SecA, found in Pasteurella multocida (strain Pm70).